The sequence spans 503 residues: Annexin A11 (503 aa).

2 stretches are compositionally biased toward pro residues: residues 80-117 (GYPP…PGMP) and 123-167 (PGAP…PVPS). Positions 80–172 (GYPPVPPGGF…QPVPSYPGYS (93 aa)) are disordered. Annexin repeat units lie at residues 198–269 (FDPL…ALMK), 270–341 (TPVL…SLSQ), 353–425 (SLVQ…AVVK), and 429–500 (NTPA…KICG). Lys246 and Lys253 each carry N6-acetyllysine. Lys477 is subject to N6-acetyllysine.

The protein belongs to the annexin family. In terms of assembly, interacts with S100A6. Interacts with PDCD6 in a calcium-dependent manner. Interacts with KIF23 during cytokinesis.

The protein localises to the cytoplasm. The protein resides in the melanosome. Its subcellular location is the nucleus envelope. It is found in the nucleus. It localises to the nucleoplasm. The protein localises to the cytoskeleton. The protein resides in the spindle. Its function is as follows. Required for midbody formation and completion of the terminal phase of cytokinesis. Binds specifically to calcyclin in a calcium-dependent manner. The polypeptide is Annexin A11 (Anxa11) (Mus musculus (Mouse)).